Here is a 150-residue protein sequence, read N- to C-terminus: Macrodomain Ter protein (150 aa).

This sequence belongs to the MatP family. As to quaternary structure, homodimer.

It localises to the cytoplasm. Functionally, required for spatial organization of the terminus region of the chromosome (Ter macrodomain) during the cell cycle. Prevents early segregation of duplicated Ter macrodomains during cell division. Binds specifically to matS, which is a 13 bp signature motif repeated within the Ter macrodomain. This is Macrodomain Ter protein from Escherichia coli O6:K15:H31 (strain 536 / UPEC).